A 393-amino-acid polypeptide reads, in one-letter code: Probable acetyl-CoA acyltransferase (393 aa).

Residue Cys88 is the Acyl-thioester intermediate of the active site. Residues His349 and Cys378 each act as proton acceptor in the active site.

This sequence belongs to the thiolase-like superfamily. Thiolase family.

It localises to the cytoplasm. The enzyme catalyses 2 acetyl-CoA = acetoacetyl-CoA + CoA. This is Probable acetyl-CoA acyltransferase from Staphylococcus aureus (strain MRSA252).